Consider the following 220-residue polypeptide: Charged multivesicular body protein 2a (220 aa).

Coiled coils occupy residues 12–53 (EEML…MAKQ) and 199–220 (PSAA…LRRD). The disordered stretch occupies residues 179–208 (LSNLPSTGGSLSVAGAKKGEPSAALADADA). Positions 208 to 218 (ADLEERLNNLR) match the MIT-interacting motif motif.

It belongs to the SNF7 family. Probable core component of the endosomal sorting required for transport complex III (ESCRT-III). ESCRT-III components are thought to multimerize to form a flat lattice on the perimeter membrane of the endosome.

The protein localises to the late endosome membrane. Its subcellular location is the cytoplasm. Its function is as follows. Probable core component of the endosomal sorting required for transport complex III (ESCRT-III) which is involved in multivesicular bodies (MVBs) formation and sorting of endosomal cargo proteins into MVBs. MVBs contain intraluminal vesicles (ILVs) that are generated by invagination and scission from the limiting membrane of the endosome and mostly are delivered to lysosomes enabling degradation of membrane proteins, such as stimulated growth factor receptors, lysosomal enzymes and lipids. The chain is Charged multivesicular body protein 2a (chmp2a) from Xenopus tropicalis (Western clawed frog).